We begin with the raw amino-acid sequence, 290 residues long: Fructose-1,6-bisphosphatase class 1 (290 aa).

Positions 78, 96, 98, and 99 each coordinate Mg(2+). Residues 99 to 102 (DGSS), Tyr-201, and Lys-226 each bind substrate. Glu-232 is a Mg(2+) binding site.

Belongs to the FBPase class 1 family. In terms of assembly, homotetramer. The cofactor is Mg(2+).

Its subcellular location is the cytoplasm. It carries out the reaction beta-D-fructose 1,6-bisphosphate + H2O = beta-D-fructose 6-phosphate + phosphate. It participates in carbohydrate biosynthesis; gluconeogenesis. The protein is Fructose-1,6-bisphosphatase class 1 of Helicobacter pylori (strain HPAG1).